The chain runs to 229 residues: uncharacterized protein (229 aa).

The disordered stretch occupies residues 1-41 (MRSAKVGVARQLETKKPQTGRKISTSSRGTIHSQQSQPEDI). Over residues 21 to 39 (RKISTSSRGTIHSQQSQPE) the composition is skewed to polar residues. 4 consecutive EF-hand domains span residues 48–83 (KELKEYRQLFNMFDTDGSGAIGNEELKQAMISIGLH), 84–119 (ANKAEIDNVIKEVDADGNGEIDFEEFCACMKKSQNI), 123–158 (TNEELIRECFEIFDQDRNGIITENEFKYIAKEFGDF), and 159–193 (DDELAEKVFRELDVSANGHLSADQFATIVEDYLLN). Residues Asp-61, Asp-63, Ser-65, Glu-72, Asp-97, Asp-99, Asn-101, Glu-103, Glu-108, Asp-136, Asp-138, Asn-140, and Glu-147 each coordinate Ca(2+). A compositionally biased stretch (basic and acidic residues) spans 194–217 (DPKHDIDTGDSDVERYDDRHDDRA). A disordered region spans residues 194 to 229 (DPKHDIDTGDSDVERYDDRHDDRASPMPNHLSTVPE).

This is an uncharacterized protein from Caenorhabditis elegans.